We begin with the raw amino-acid sequence, 423 residues long: Gamma-glutamyl phosphate reductase (423 aa).

This sequence belongs to the gamma-glutamyl phosphate reductase family.

Its subcellular location is the cytoplasm. It catalyses the reaction L-glutamate 5-semialdehyde + phosphate + NADP(+) = L-glutamyl 5-phosphate + NADPH + H(+). It participates in amino-acid biosynthesis; L-proline biosynthesis; L-glutamate 5-semialdehyde from L-glutamate: step 2/2. In terms of biological role, catalyzes the NADPH-dependent reduction of L-glutamate 5-phosphate into L-glutamate 5-semialdehyde and phosphate. The product spontaneously undergoes cyclization to form 1-pyrroline-5-carboxylate. In Roseiflexus castenholzii (strain DSM 13941 / HLO8), this protein is Gamma-glutamyl phosphate reductase.